A 192-amino-acid polypeptide reads, in one-letter code: 3-hydroxyanthranilate 3,4-dioxygenase 1 (192 aa).

Residue Arg-50 coordinates O2. Residues His-54, Glu-60, and His-102 each contribute to the Fe cation site. Glu-60 contributes to the substrate binding site. Residues Arg-106 and Glu-116 each coordinate substrate. A divalent metal cation is bound by residues Cys-131, Cys-134, Cys-168, and Cys-171.

It belongs to the 3-HAO family. Requires Fe(2+) as cofactor.

The protein resides in the cytoplasm. The catalysed reaction is 3-hydroxyanthranilate + O2 = (2Z,4Z)-2-amino-3-carboxymuconate 6-semialdehyde. Its pathway is cofactor biosynthesis; NAD(+) biosynthesis; quinolinate from L-kynurenine: step 3/3. Functionally, catalyzes the oxidative ring opening of 3-hydroxyanthranilate to 2-amino-3-carboxymuconate semialdehyde, which spontaneously cyclizes to quinolinate. The polypeptide is 3-hydroxyanthranilate 3,4-dioxygenase 1 (bna1-1) (Aspergillus oryzae (strain ATCC 42149 / RIB 40) (Yellow koji mold)).